The following is a 222-amino-acid chain: Gamma-glutamyl cyclotransferase gliK (222 aa).

2 consecutive transmembrane segments (helical) span residues 154–174 and 187–207; these read GWWF…AAII and GHVP…MWAQ.

It belongs to the class-I pyridoxal-phosphate-dependent aminotransferase family.

It localises to the membrane. It catalyses the reaction an alpha-(gamma-L-glutamyl)-L-amino acid = 5-oxo-L-proline + an L-alpha-amino acid. It participates in secondary metabolite biosynthesis. Gamma-glutamyl cyclotransferase; part of the gene cluster that mediates the biosynthesis of an unusual class of epipolythiodioxopiperazines (ETPs) lacking the reactive thiol group important for toxicity. Firstly, L-tyrosine is prenylated by tcpD, before undergoing condensation with L-glycine in a reaction catalyzed by the NRPS tcpP leading to the diketopiperazine (DKP) backbone. Afterwards the alpha-carbon of tyrosine is oxidized by the cytochrome P450 tcpC to form a hydroxyl group. However, in contrast other ETP biosynthesis pathways studied so far, tcpC is not able to bishydroxylate the DKP at both alpha-carbon positions, but hydroxylates the alpha-carbon of the tyrosine part and the nitrogen of the glycine part. The next steps involve an alpha,beta-elimination reaction catalyzed by tcpI, a methylation by the methyltransferase tcpN the action of the four enzyme cascade tcpG/K/J/I. Due to a dysfunctional cytochrome P450 monooxygenase tcpC, the pathway leads to the biosynthesis of probable non-toxic metabolites lacking the reactive thiol group. The sequence is that of Gamma-glutamyl cyclotransferase gliK from Claviceps purpurea (strain 20.1) (Ergot fungus).